The following is a 579-amino-acid chain: MAGVLAGECSYSESGVSSHSRNSHEKQEEVSRWYFGRKEIEENSPSRLDGIDLKKETYLRKSYCTFLQDLGMRLKVPQVTIATAIIFCHRFFFRQSHAKNDRRTIATVCMFLAGKVEETPRPLKDVIFVSYEIINKKDPGASQKIKQKEVYEQQKELILNGEKIVLSTLGFDLNVYHPYKPLVEAIKKFKVAQNALAQVAWNFVNDGLRTSLCLQFKPHHIAAGAIFLAAKFLKVKLPSDGEKVWWQEFDVTPRQLEDVSNQMLELYEQNRVPASQGSEVESSVGGGSAQRPGSRNAVSTDEHVGSRQTSSVRSTHEQSNSDNHGGSSKGVLNQNNENGGGEAANVSVDNKEEIERETKESSLHLESHPAHKDNVREAPHNSRPLVEGPGKDNSEREGGELQDDGAVHKSRNVDVGDALISQSPKDLKLLRDKVKAKREKAKKLLGERTRKKDLMDEDDLIERELEDVQLAVEDEKTKERKVQSRPKAENSDLMGTEHGEILDVKGEVKNTEEGEMVNNNVSPMMHSRKRKMGSPPEKQSEGKRRHNSENGEESHKTSRGSSHHGDREHRRHSQENNHS.

Disordered stretches follow at residues Met-1–Gln-27 and Arg-271–Leu-419. The segment covering Tyr-11–Ser-20 has biased composition (polar residues). A compositionally biased stretch (low complexity) spans Ala-274–Ser-283. The segment covering Ser-306–Gln-334 has biased composition (polar residues). Basic and acidic residues-rich tracts occupy residues Asp-349–His-380 and Pro-389–Asp-414. Ser-423 is subject to Phosphoserine. Composition is skewed to basic and acidic residues over residues Asp-474–Glu-512, Lys-538–Lys-556, and His-563–Ser-579. A disordered region spans residues Asp-474–Ser-579.

This sequence belongs to the cyclin family. Cyclin T subfamily.

This is Cyclin-T1-5 (CYCT1-5) from Arabidopsis thaliana (Mouse-ear cress).